The primary structure comprises 144 residues: Large ribosomal subunit protein uL16 (144 aa).

The segment covering 1–16 (MLQPKKTKFRRQQKGR) has biased composition (basic residues). Residues 1 to 22 (MLQPKKTKFRRQQKGRMKGEAQ) form a disordered region.

The protein belongs to the universal ribosomal protein uL16 family. Part of the 50S ribosomal subunit.

Binds 23S rRNA and is also seen to make contacts with the A and possibly P site tRNAs. This is Large ribosomal subunit protein uL16 from Parabacteroides distasonis (strain ATCC 8503 / DSM 20701 / CIP 104284 / JCM 5825 / NCTC 11152).